The chain runs to 302 residues: Glutaminase (302 aa).

Positions 61, 111, 155, 162, 186, 238, and 256 each coordinate substrate.

The protein belongs to the glutaminase family. In terms of assembly, homotetramer.

The catalysed reaction is L-glutamine + H2O = L-glutamate + NH4(+). The protein is Glutaminase of Pseudomonas fluorescens (strain Pf0-1).